We begin with the raw amino-acid sequence, 257 residues long: Ribonuclease HII (257 aa).

An RNase H type-2 domain is found at 72-257; the sequence is TYIAGIDEVG…FAPIKDMIQK (186 aa). Residues aspartate 78, glutamate 79, and aspartate 170 each coordinate a divalent metal cation.

This sequence belongs to the RNase HII family. Mn(2+) is required as a cofactor. Requires Mg(2+) as cofactor.

Its subcellular location is the cytoplasm. It catalyses the reaction Endonucleolytic cleavage to 5'-phosphomonoester.. In terms of biological role, endonuclease that specifically degrades the RNA of RNA-DNA hybrids. This chain is Ribonuclease HII, found in Bacillus cereus (strain ZK / E33L).